The primary structure comprises 178 residues: Large ribosomal subunit protein uL6 (178 aa).

Belongs to the universal ribosomal protein uL6 family. As to quaternary structure, part of the 50S ribosomal subunit.

In terms of biological role, this protein binds to the 23S rRNA, and is important in its secondary structure. It is located near the subunit interface in the base of the L7/L12 stalk, and near the tRNA binding site of the peptidyltransferase center. The polypeptide is Large ribosomal subunit protein uL6 (Corynebacterium kroppenstedtii (strain DSM 44385 / JCM 11950 / CIP 105744 / CCUG 35717)).